Reading from the N-terminus, the 462-residue chain is Argininosuccinate lyase (462 aa).

Belongs to the lyase 1 family. Argininosuccinate lyase subfamily.

The protein resides in the cytoplasm. It carries out the reaction 2-(N(omega)-L-arginino)succinate = fumarate + L-arginine. Its pathway is amino-acid biosynthesis; L-arginine biosynthesis; L-arginine from L-ornithine and carbamoyl phosphate: step 3/3. The chain is Argininosuccinate lyase from Gloeothece citriformis (strain PCC 7424) (Cyanothece sp. (strain PCC 7424)).